A 476-amino-acid chain; its full sequence is Aspartyl/glutamyl-tRNA(Asn/Gln) amidotransferase subunit B (476 aa).

The protein belongs to the GatB/GatE family. GatB subfamily. In terms of assembly, heterotrimer of A, B and C subunits.

The catalysed reaction is L-glutamyl-tRNA(Gln) + L-glutamine + ATP + H2O = L-glutaminyl-tRNA(Gln) + L-glutamate + ADP + phosphate + H(+). It carries out the reaction L-aspartyl-tRNA(Asn) + L-glutamine + ATP + H2O = L-asparaginyl-tRNA(Asn) + L-glutamate + ADP + phosphate + 2 H(+). Its function is as follows. Allows the formation of correctly charged Asn-tRNA(Asn) or Gln-tRNA(Gln) through the transamidation of misacylated Asp-tRNA(Asn) or Glu-tRNA(Gln) in organisms which lack either or both of asparaginyl-tRNA or glutaminyl-tRNA synthetases. The reaction takes place in the presence of glutamine and ATP through an activated phospho-Asp-tRNA(Asn) or phospho-Glu-tRNA(Gln). The protein is Aspartyl/glutamyl-tRNA(Asn/Gln) amidotransferase subunit B of Oceanobacillus iheyensis (strain DSM 14371 / CIP 107618 / JCM 11309 / KCTC 3954 / HTE831).